A 510-amino-acid chain; its full sequence is MITTNTSSENWDLYRKVTHCLVGHTRLVLSYSGGLDSTVLLDILTRLKNNSDHFTSSPFMLRAIYVHHGISNYSDEWASHCFNQCKIRGIPFSVIHINCYNAENKQRNIEALARNLRYKKLYNRLNSKEILLTAHHMNDQVESLFLALKRGSGPSGLSGMSKNALYANKYRLLRPLLDCSREQLEMYAYKKKLVWIEDDTNTDTRFDRNFLRIKILPSIYQRWPCFNQVVARTAQLCRDQENLLNELLSESFQKLIDESDGSLLFIPLFQYSIPKRQALLRRWLLHFSMKMPSYQLINRIWKEVVLSRKDATPILQLDKYLCRRFREKLYILPVNMRCSLNRIELSWNIIHNVFILPYNLGKLIYQPLSINEHVPKNPFDLHLNINSSLNTSHDVFEKYKKVLTHCFVRSPKSDEKISIIFGNIDGLLYILGRNHGRHLKKIWQELGVPPWLRSRIPLLFYNKTLITAIGVFITHNGKIISKENTLWKISWLQDIISYKIFKNSVRYHLE.

32–37 (SGGLDS) lines the ATP pocket.

This sequence belongs to the tRNA(Ile)-lysidine synthase family.

Its subcellular location is the cytoplasm. The enzyme catalyses cytidine(34) in tRNA(Ile2) + L-lysine + ATP = lysidine(34) in tRNA(Ile2) + AMP + diphosphate + H(+). In terms of biological role, ligates lysine onto the cytidine present at position 34 of the AUA codon-specific tRNA(Ile) that contains the anticodon CAU, in an ATP-dependent manner. Cytidine is converted to lysidine, thus changing the amino acid specificity of the tRNA from methionine to isoleucine. The sequence is that of tRNA(Ile)-lysidine synthase from Blochmanniella pennsylvanica (strain BPEN).